A 416-amino-acid polypeptide reads, in one-letter code: Adenylosuccinate synthetase (416 aa).

GTP is bound by residues 12–18 and 40–42; these read GDEGKGK and GHT. D13 (proton acceptor) is an active-site residue. Residues D13 and G40 each coordinate Mg(2+). Residues 13-16, 38-41, T125, R139, Q219, T234, and R298 each bind IMP; these read DEGK and NAGH. H41 serves as the catalytic Proton donor. 294–300 is a binding site for substrate; it reads TVTGRKR. GTP-binding positions include R300, 326–328, and 404–406; these read KLD and STS.

Belongs to the adenylosuccinate synthetase family. As to quaternary structure, homodimer. It depends on Mg(2+) as a cofactor.

It is found in the cytoplasm. It carries out the reaction IMP + L-aspartate + GTP = N(6)-(1,2-dicarboxyethyl)-AMP + GDP + phosphate + 2 H(+). It participates in purine metabolism; AMP biosynthesis via de novo pathway; AMP from IMP: step 1/2. Functionally, plays an important role in the de novo pathway of purine nucleotide biosynthesis. Catalyzes the first committed step in the biosynthesis of AMP from IMP. The protein is Adenylosuccinate synthetase of Aliarcobacter butzleri (strain RM4018) (Arcobacter butzleri).